Reading from the N-terminus, the 422-residue chain is Serine hydroxymethyltransferase (422 aa).

Residues Leu-118 and 122-124 (GHL) each bind (6S)-5,6,7,8-tetrahydrofolate. Position 227 is an N6-(pyridoxal phosphate)lysine (Lys-227). (6S)-5,6,7,8-tetrahydrofolate contacts are provided by residues Glu-243 and 351-353 (SPF).

This sequence belongs to the SHMT family. Homodimer. Pyridoxal 5'-phosphate serves as cofactor.

It is found in the cytoplasm. It catalyses the reaction (6R)-5,10-methylene-5,6,7,8-tetrahydrofolate + glycine + H2O = (6S)-5,6,7,8-tetrahydrofolate + L-serine. The protein operates within one-carbon metabolism; tetrahydrofolate interconversion. Its pathway is amino-acid biosynthesis; glycine biosynthesis; glycine from L-serine: step 1/1. In terms of biological role, catalyzes the reversible interconversion of serine and glycine with tetrahydrofolate (THF) serving as the one-carbon carrier. This reaction serves as the major source of one-carbon groups required for the biosynthesis of purines, thymidylate, methionine, and other important biomolecules. Also exhibits THF-independent aldolase activity toward beta-hydroxyamino acids, producing glycine and aldehydes, via a retro-aldol mechanism. This is Serine hydroxymethyltransferase from Kosmotoga olearia (strain ATCC BAA-1733 / DSM 21960 / TBF 19.5.1).